Reading from the N-terminus, the 344-residue chain is Aurora kinase B (344 aa).

Thr35 bears the Phosphothreonine mark. Residues 46-65 (NAQPTAAPGQKVVENSSGTP) are disordered. Ser62 is modified (phosphoserine). Thr64 is modified (phosphothreonine). A Protein kinase domain is found at 77-327 (FEIGRPLGKG…LAQVSAHPWV (251 aa)). ATP-binding positions include 83–91 (LGKGKFGNV) and Lys106. Asp200 acts as the Proton acceptor in catalysis. Lys215 carries the N6-acetyllysine modification. The residue at position 227 (Ser227) is a Phosphoserine. Thr232 carries the phosphothreonine; by autocatalysis modification.

The protein belongs to the protein kinase superfamily. Ser/Thr protein kinase family. Aurora subfamily. In terms of assembly, component of the chromosomal passenger complex (CPC) composed of at least BIRC5/survivin, CDCA8/borealin, INCENP, AURKB or AURKC; predominantly independent AURKB- and AURKC-containing complexes exist. Associates with RACGAP1 during M phase. Interacts with SPDYC; this interaction may be required for proper localization of active, Thr-232-phosphorylated AURKB form during prometaphase and metaphase. Interacts with p53/TP53. Interacts (via the middle kinase domain) with NOC2L (via the N- and C-terminus domains). Interacts with CDCA1. Interacts with EVI5. Interacts with JTB. Interacts with NDC80. Interacts with PSMA3. Interacts with RNF2/RING1B. Interacts with SEPTIN1. Interacts with SIRT2. Interacts with TACC1. Interacts with TTC28. The phosphorylation of Thr-232 requires the binding to INCENP and occurs by means of an autophosphorylation mechanism. Thr-232 phosphorylation is indispensable for the AURKB kinase activity. In terms of processing, acetylated at Lys-215 by KAT5 at kinetochores, increasing AURKB activity and promoting accurate chromosome segregation in mitosis. Post-translationally, ubiquitinated by different BCR (BTB-CUL3-RBX1) E3 ubiquitin ligase complexes. Ubiquitinated by the BCR(KLHL9-KLHL13) E3 ubiquitin ligase complex, ubiquitination leads to removal from mitotic chromosomes and is required for cytokinesis. During anaphase, the BCR(KLHL21) E3 ubiquitin ligase complex recruits the CPC complex from chromosomes to the spindle midzone and mediates the ubiquitination of AURKB. Ubiquitination of AURKB by BCR(KLHL21) E3 ubiquitin ligase complex may not lead to its degradation by the proteasome. Deubiquitinated by USP35; inhibiting CDH1-mediated degradation of AURKB.

It is found in the nucleus. It localises to the chromosome. The protein resides in the centromere. Its subcellular location is the kinetochore. The protein localises to the cytoplasm. It is found in the cytoskeleton. It localises to the spindle. The protein resides in the midbody. The enzyme catalyses L-seryl-[protein] + ATP = O-phospho-L-seryl-[protein] + ADP + H(+). It catalyses the reaction L-threonyl-[protein] + ATP = O-phospho-L-threonyl-[protein] + ADP + H(+). Activity is greatly increased when AURKB is within the CPC complex. In particular, AURKB-phosphorylated INCENP acts as an activator of AURKB. Positive feedback between HASPIN and AURKB contributes to CPC localization. In terms of biological role, serine/threonine-protein kinase component of the chromosomal passenger complex (CPC), a complex that acts as a key regulator of mitosis. The CPC complex has essential functions at the centromere in ensuring correct chromosome alignment and segregation and is required for chromatin-induced microtubule stabilization and spindle assembly. Involved in the bipolar attachment of spindle microtubules to kinetochores and is a key regulator for the onset of cytokinesis during mitosis. Required for central/midzone spindle assembly and cleavage furrow formation. Key component of the cytokinesis checkpoint, a process required to delay abscission to prevent both premature resolution of intercellular chromosome bridges and accumulation of DNA damage: phosphorylates CHMP4C, leading to retain abscission-competent VPS4 (VPS4A and/or VPS4B) at the midbody ring until abscission checkpoint signaling is terminated at late cytokinesis. AURKB phosphorylates the CPC complex subunits BIRC5/survivin, CDCA8/borealin and INCENP. Phosphorylation of INCENP leads to increased AURKB activity. Other known AURKB substrates involved in centromeric functions and mitosis are CENPA, DES/desmin, GPAF, KIF2C, NSUN2, RACGAP1, SEPTIN1, VIM/vimentin, HASPIN, and histone H3. A positive feedback loop involving HASPIN and AURKB contributes to localization of CPC to centromeres. Phosphorylation of VIM controls vimentin filament segregation in cytokinetic process, whereas histone H3 is phosphorylated at 'Ser-10' and 'Ser-28' during mitosis (H3S10ph and H3S28ph, respectively). AURKB is also required for kinetochore localization of BUB1 and SGO1. Phosphorylation of p53/TP53 negatively regulates its transcriptional activity. Key regulator of active promoters in resting B- and T-lymphocytes: acts by mediating phosphorylation of H3S28ph at active promoters in resting B-cells, inhibiting RNF2/RING1B-mediated ubiquitination of histone H2A and enhancing binding and activity of the USP16 deubiquitinase at transcribed genes. Acts as an inhibitor of CGAS during mitosis: catalyzes phosphorylation of the N-terminus of CGAS during the G2-M transition, blocking CGAS liquid phase separation and activation, and thereby preventing CGAS-induced autoimmunity. Phosphorylates KRT5 during anaphase and telophase. Phosphorylates ATXN10 which promotes phosphorylation of ATXN10 by PLK1 and may play a role in the regulation of cytokinesis and stimulating the proteasomal degradation of ATXN10. This Bos taurus (Bovine) protein is Aurora kinase B (AURKB).